Consider the following 282-residue polypeptide: Shikimate kinase (282 aa).

P86–A96 contributes to the ATP binding site.

The protein belongs to the GHMP kinase family. Archaeal shikimate kinase subfamily.

The protein resides in the cytoplasm. It catalyses the reaction shikimate + ATP = 3-phosphoshikimate + ADP + H(+). Its pathway is metabolic intermediate biosynthesis; chorismate biosynthesis; chorismate from D-erythrose 4-phosphate and phosphoenolpyruvate: step 5/7. The sequence is that of Shikimate kinase (aroK) from Methanocaldococcus jannaschii (strain ATCC 43067 / DSM 2661 / JAL-1 / JCM 10045 / NBRC 100440) (Methanococcus jannaschii).